The following is a 345-amino-acid chain: Eukaryotic translation initiation factor 3 subunit F (345 aa).

The 137-residue stretch at 30–166 folds into the MPN domain; that stretch reads VVIQPQAIFS…TRAYISAPVG (137 aa). The tract at residues 310–345 is disordered; it reads EGASAEAGAQRGQRGGKGGRGGQQRTQERASEEVRA. Residues 312–321 show a composition bias toward low complexity; sequence ASAEAGAQRG. Residues 322 to 331 show a composition bias toward gly residues; sequence QRGGKGGRGG. Residues 335-345 are compositionally biased toward basic and acidic residues; that stretch reads TQERASEEVRA.

Belongs to the eIF-3 subunit F family. Component of the eukaryotic translation initiation factor 3 (eIF-3) complex.

It is found in the cytoplasm. Its function is as follows. Component of the eukaryotic translation initiation factor 3 (eIF-3) complex, which is involved in protein synthesis of a specialized repertoire of mRNAs and, together with other initiation factors, stimulates binding of mRNA and methionyl-tRNAi to the 40S ribosome. The eIF-3 complex specifically targets and initiates translation of a subset of mRNAs involved in cell proliferation. The chain is Eukaryotic translation initiation factor 3 subunit F from Aspergillus fumigatus (strain CBS 144.89 / FGSC A1163 / CEA10) (Neosartorya fumigata).